The chain runs to 238 residues: Ribonuclease PH (238 aa).

Phosphate is bound by residues arginine 86 and 124 to 126 (GTR).

This sequence belongs to the RNase PH family. In terms of assembly, homohexameric ring arranged as a trimer of dimers.

It catalyses the reaction tRNA(n+1) + phosphate = tRNA(n) + a ribonucleoside 5'-diphosphate. Its function is as follows. Phosphorolytic 3'-5' exoribonuclease that plays an important role in tRNA 3'-end maturation. Removes nucleotide residues following the 3'-CCA terminus of tRNAs; can also add nucleotides to the ends of RNA molecules by using nucleoside diphosphates as substrates, but this may not be physiologically important. Probably plays a role in initiation of 16S rRNA degradation (leading to ribosome degradation) during starvation. The chain is Ribonuclease PH from Serratia proteamaculans (strain 568).